We begin with the raw amino-acid sequence, 389 residues long: MTGPLGAGPQALPAAPLEDWLRERYFQAKTDISSSGVHNYTFGELRALDPALLGTRELDQLMFRDGPSLGDERLRAAVAARVRPGPGHVVMTTHGSSEALYLAFAALVRPGDEVVVATPAYHSLSGLATAAGASLRPWPLRPENGFAPDLDDLRAVLSDRTRLVVVNFPHNPSGACVDPRGRTELLDLVANSQAVLLWDGAFTDLVHDHPPLAEPSQDLDRVLSFGTLSKAYGLPGLRVGWCVVPQDLVSELVRIRDYLTLSLSPLVERVAAVAVEHADALITPRLTEARHNRRRVLEWAAASEGAIDCPVPRGGVTAFPRFTAHTDVTDLCERLLARHGVLVVPGRVFGQADRMRIGFSCPRPELERGLAAISEELGTHARGRRRGTG.

At lysine 230 the chain carries N6-(pyridoxal phosphate)lysine.

This sequence belongs to the class-II pyridoxal-phosphate-dependent aminotransferase family. The cofactor is pyridoxal 5'-phosphate.

It carries out the reaction (2S,3S)-hydroxyarginine = (2S,3R)-capreomycidine + H2O. The protein operates within antibiotic biosynthesis. Its function is as follows. Involved in the biosynthesis of capreomycidine, an unusual amino acid used by non-ribosomal peptide synthases (NRPS) to make the tuberactinomycin class of peptide antibiotic such as viomycin and capreomycin. Catalyzes the dehydration of the C3 hydroxyl of (3S)-hydroxy-(2S)-arginine and the intramolecular cyclization to yield (2S,3R)-capreomycidine. The polypeptide is Capreomycidine synthase (Streptomyces vinaceus).